The primary structure comprises 129 residues: DNA-directed RNA polymerase subunit omega (129 aa).

A disordered region spans residues 76-101 (EVDEPEPDPVTLAASAADGEDDDQPE).

Belongs to the RNA polymerase subunit omega family. As to quaternary structure, the RNAP catalytic core consists of 2 alpha, 1 beta, 1 beta' and 1 omega subunit. When a sigma factor is associated with the core the holoenzyme is formed, which can initiate transcription.

The enzyme catalyses RNA(n) + a ribonucleoside 5'-triphosphate = RNA(n+1) + diphosphate. Its function is as follows. Promotes RNA polymerase assembly. Latches the N- and C-terminal regions of the beta' subunit thereby facilitating its interaction with the beta and alpha subunits. In Agrobacterium fabrum (strain C58 / ATCC 33970) (Agrobacterium tumefaciens (strain C58)), this protein is DNA-directed RNA polymerase subunit omega.